Here is a 398-residue protein sequence, read N- to C-terminus: Argininosuccinate synthase (398 aa).

8-16 (AYSGGLDTS) lines the ATP pocket. Residue Tyr-87 coordinates L-citrulline. Position 117 (Gly-117) interacts with ATP. Positions 119, 123, and 124 each coordinate L-aspartate. Residue Asn-123 coordinates L-citrulline. The L-citrulline site is built by Arg-127, Ser-175, Glu-259, and Tyr-271.

It belongs to the argininosuccinate synthase family. Type 1 subfamily. As to quaternary structure, homotetramer.

Its subcellular location is the cytoplasm. The enzyme catalyses L-citrulline + L-aspartate + ATP = 2-(N(omega)-L-arginino)succinate + AMP + diphosphate + H(+). The protein operates within amino-acid biosynthesis; L-arginine biosynthesis; L-arginine from L-ornithine and carbamoyl phosphate: step 2/3. The protein is Argininosuccinate synthase of Corynebacterium kroppenstedtii (strain DSM 44385 / JCM 11950 / CIP 105744 / CCUG 35717).